A 276-amino-acid chain; its full sequence is Putative pyruvate, phosphate dikinase regulatory protein (276 aa).

ADP is bound at residue 152–159; sequence GISRTSKT.

Belongs to the pyruvate, phosphate/water dikinase regulatory protein family. PDRP subfamily.

It carries out the reaction N(tele)-phospho-L-histidyl/L-threonyl-[pyruvate, phosphate dikinase] + ADP = N(tele)-phospho-L-histidyl/O-phospho-L-threonyl-[pyruvate, phosphate dikinase] + AMP + H(+). The catalysed reaction is N(tele)-phospho-L-histidyl/O-phospho-L-threonyl-[pyruvate, phosphate dikinase] + phosphate + H(+) = N(tele)-phospho-L-histidyl/L-threonyl-[pyruvate, phosphate dikinase] + diphosphate. Its function is as follows. Bifunctional serine/threonine kinase and phosphorylase involved in the regulation of the pyruvate, phosphate dikinase (PPDK) by catalyzing its phosphorylation/dephosphorylation. In Staphylococcus carnosus (strain TM300), this protein is Putative pyruvate, phosphate dikinase regulatory protein.